The following is a 909-amino-acid chain: Alanine--tRNA ligase (909 aa).

Zn(2+) contacts are provided by His600, His604, Cys704, and His708.

It belongs to the class-II aminoacyl-tRNA synthetase family. Zn(2+) is required as a cofactor.

It is found in the cytoplasm. It catalyses the reaction tRNA(Ala) + L-alanine + ATP = L-alanyl-tRNA(Ala) + AMP + diphosphate. Functionally, catalyzes the attachment of alanine to tRNA(Ala) in a two-step reaction: alanine is first activated by ATP to form Ala-AMP and then transferred to the acceptor end of tRNA(Ala). Also edits incorrectly charged Ser-tRNA(Ala) and Gly-tRNA(Ala) via its editing domain. In Staphylothermus marinus (strain ATCC 43588 / DSM 3639 / JCM 9404 / F1), this protein is Alanine--tRNA ligase.